Consider the following 1271-residue polypeptide: Zinc finger transcription factor Trps1 (1271 aa).

2 disordered regions span residues 1–76 (MVRK…DSAS) and 124–155 (SPIK…DMSP). Residues 34–49 (SKEISTDPMQENSEQS) show a composition bias toward polar residues. Over residues 54–65 (HNSDDHSFHDQE) the composition is skewed to basic and acidic residues. Residues 66–76 (PSSSINKDSAS) show a composition bias toward polar residues. The segment at 217 to 242 (FKCNICGYGYYGNDPTDLIKHFRKYH) adopts a C2H2-type 1; atypical zinc-finger fold. The segment at 328-353 (FRCKFCNFTYLAKSATELEQHFLKTH) adopts a C2H2-type 2; atypical zinc-finger fold. The tract at residues 353 to 387 (HPNKMKMSSDSGKPSEKSTNKSSPIPRSCEPGDLG) is disordered. Residues 426 to 451 (YWCKFCSFSCESSSNSKLLEHHSKQH) form a C2H2-type 3; atypical zinc finger. Residues 513 to 543 (YNCQFCDFRYSKSHGPEVILVGPLLRHYQQH) form a C2H2-type 4; atypical zinc finger. 3 C2H2-type zinc fingers span residues 604 to 627 (HQCD…ENAH), 656 to 679 (HSCT…RRVH), and 682 to 705 (YKCR…NSAH). The interval 843 to 877 (GVTAGASGEKSGQHTPQYPTAGDSKSKDESQSLLR) is disordered. A GATA-type zinc finger spans residues 886 to 910 (CANCLTTKTSLWRKNANGGYVCNAC). Disordered stretches follow at residues 938–987 (RTRK…RENQ), 1031–1064 (SPQE…YMRP), and 1154–1196 (LDLA…EKSD). Positions 972–985 (IRSEDHSMEGHQRE) are enriched in basic and acidic residues. Positions 1031–1049 (SPQESSGEPGNSSSVSDGK) are enriched in low complexity. Basic and acidic residues-rich tracts occupy residues 1050-1062 (GSSE…EKYM) and 1170-1196 (DSKE…EKSD). Residues 1153–1271 (PLDLAMKHSR…QAEKNGKNKD (119 aa)) form a transcriptional repressor domain region. Glycyl lysine isopeptide (Lys-Gly) (interchain with G-Cter in SUMO) cross-links involve residues Lys1182 and Lys1191. 2 C2H2-type zinc fingers span residues 1205-1227 (TKCV…MSCH) and 1233-1257 (FQCS…RGLH).

As to quaternary structure, binds specifically to GATA sequences. In terms of processing, sumoylated. Sumoylation in the repressor domain inhibits the transcription repression activity. Sumoylation on Lys-1191 is the major site. Appears to be sumoylated on multiple sites.

It is found in the nucleus. In terms of biological role, transcriptional repressor. Represses expression of GATA-regulated genes at selected sites and stages in vertebrate development. The chain is Zinc finger transcription factor Trps1 (trps1) from Xenopus laevis (African clawed frog).